The following is a 419-amino-acid chain: Tyrosine--tRNA ligase (419 aa).

Tyr34 contributes to the L-tyrosine binding site. The short motif at 39 to 48 (PTADSLHIGN) is the 'HIGH' region element. Residues Tyr169 and Gln173 each coordinate L-tyrosine. A 'KMSKS' region motif is present at residues 230-234 (KFGKT). Lys233 is an ATP binding site. An S4 RNA-binding domain is found at 352-419 (VPLVELLVSA…KKKYYLIRYA (68 aa)).

Belongs to the class-I aminoacyl-tRNA synthetase family. TyrS type 1 subfamily. In terms of assembly, homodimer.

Its subcellular location is the cytoplasm. The enzyme catalyses tRNA(Tyr) + L-tyrosine + ATP = L-tyrosyl-tRNA(Tyr) + AMP + diphosphate + H(+). Functionally, catalyzes the attachment of tyrosine to tRNA(Tyr) in a two-step reaction: tyrosine is first activated by ATP to form Tyr-AMP and then transferred to the acceptor end of tRNA(Tyr). The protein is Tyrosine--tRNA ligase of Bacillus caldotenax.